The primary structure comprises 438 residues: Serine hydroxymethyltransferase (438 aa).

Position 133–135 (133–135 (GHI)) interacts with (6S)-5,6,7,8-tetrahydrofolate. Residue Lys-239 is modified to N6-(pyridoxal phosphate)lysine.

The protein belongs to the SHMT family. Homodimer. Requires pyridoxal 5'-phosphate as cofactor.

The protein resides in the cytoplasm. It catalyses the reaction 5,10-methylenetetrahydromethanopterin + glycine + H2O = 5,6,7,8-tetrahydromethanopterin + L-serine. It functions in the pathway amino-acid biosynthesis; glycine biosynthesis; glycine from L-serine: step 1/1. In terms of biological role, catalyzes the reversible interconversion of serine and glycine with tetrahydromethanopterin (H4MPT) serving as the one-carbon carrier. Also exhibits a pteridine-independent aldolase activity toward beta-hydroxyamino acids, producing glycine and aldehydes, via a retro-aldol mechanism. The polypeptide is Serine hydroxymethyltransferase (Archaeoglobus fulgidus (strain ATCC 49558 / DSM 4304 / JCM 9628 / NBRC 100126 / VC-16)).